The chain runs to 469 residues: Uronate isomerase (469 aa).

It belongs to the metallo-dependent hydrolases superfamily. Uronate isomerase family.

It carries out the reaction D-glucuronate = D-fructuronate. The enzyme catalyses aldehydo-D-galacturonate = keto-D-tagaturonate. The protein operates within carbohydrate metabolism; pentose and glucuronate interconversion. The chain is Uronate isomerase from Pectobacterium atrosepticum (strain SCRI 1043 / ATCC BAA-672) (Erwinia carotovora subsp. atroseptica).